The following is a 120-amino-acid chain: Large ribosomal subunit protein eL18 (120 aa).

It belongs to the eukaryotic ribosomal protein eL18 family.

The sequence is that of Large ribosomal subunit protein eL18 from Thermoplasma acidophilum (strain ATCC 25905 / DSM 1728 / JCM 9062 / NBRC 15155 / AMRC-C165).